The chain runs to 595 residues: Polyadenylate-binding protein-interacting protein 4 (595 aa).

The Sm domain occupies 48-113 (RLVYFTTCKI…SRSEFVRKPP (66 aa)). 2 stretches are compositionally biased toward polar residues: residues 302 to 313 (GGSSTSDGQKPA) and 326 to 346 (GDSQSSRKNKNVDQSCSTSKQ). 2 disordered regions span residues 302–505 (GGSS…FYYP) and 536–595 (MYHP…KGRE). A compositionally biased stretch (basic and acidic residues) spans 364 to 382 (DEQRRKNNEEVSHNNRSAE). Residues 416 to 465 (SQVSSKTKSESSFGQSASRSSESRPGPSTSSRPGLSPSSSIGSMASSEKS) are compositionally biased toward low complexity. A PAM2-like 1; degenerate motif is present at residues 466 to 474 (TLNPNAKEF). A PAM2-like 2 motif is present at residues 475-485 (KLNPKAKSFKP). Composition is skewed to low complexity over residues 488-501 (SAAAPPQSPIADAS) and 548-570 (QPQYPQQQMIPGQQQQQMIPGQQ).

Expressed in cauline leaves, stems, rosette leaves, immature siliques and primary inflorescences.

The polypeptide is Polyadenylate-binding protein-interacting protein 4 (CID4) (Arabidopsis thaliana (Mouse-ear cress)).